The sequence spans 178 residues: Oligoribonuclease (178 aa).

Positions 7 to 168 (LIWIDLEMTG…DDIRESIAEL (162 aa)) constitute an Exonuclease domain. Tyr128 is an active-site residue.

Belongs to the oligoribonuclease family.

The protein localises to the cytoplasm. 3'-to-5' exoribonuclease specific for small oligoribonucleotides. In Francisella tularensis subsp. holarctica (strain OSU18), this protein is Oligoribonuclease.